We begin with the raw amino-acid sequence, 172 residues long: ATP synthase subunit b (172 aa).

The chain crosses the membrane as a helical span at residues 12–32 (VGFNAGTMLFQLVAMLILLAL).

It belongs to the ATPase B chain family. In terms of assembly, F-type ATPases have 2 components, F(1) - the catalytic core - and F(0) - the membrane proton channel. F(1) has five subunits: alpha(3), beta(3), gamma(1), delta(1), epsilon(1). F(0) has three main subunits: a(1), b(2) and c(10-14). The alpha and beta chains form an alternating ring which encloses part of the gamma chain. F(1) is attached to F(0) by a central stalk formed by the gamma and epsilon chains, while a peripheral stalk is formed by the delta and b chains.

It localises to the cell membrane. In terms of biological role, f(1)F(0) ATP synthase produces ATP from ADP in the presence of a proton or sodium gradient. F-type ATPases consist of two structural domains, F(1) containing the extramembraneous catalytic core and F(0) containing the membrane proton channel, linked together by a central stalk and a peripheral stalk. During catalysis, ATP synthesis in the catalytic domain of F(1) is coupled via a rotary mechanism of the central stalk subunits to proton translocation. Its function is as follows. Component of the F(0) channel, it forms part of the peripheral stalk, linking F(1) to F(0). This is ATP synthase subunit b from Bacillus licheniformis (strain ATCC 14580 / DSM 13 / JCM 2505 / CCUG 7422 / NBRC 12200 / NCIMB 9375 / NCTC 10341 / NRRL NRS-1264 / Gibson 46).